Consider the following 307-residue polypeptide: Ornithine carbamoyltransferase (307 aa).

Residues 56–59 (STRT), glutamine 83, arginine 107, and 134–137 (HPCQ) each bind carbamoyl phosphate. L-ornithine contacts are provided by residues asparagine 165, aspartate 223, and 227 to 228 (SM). Residues 263 to 264 (CL) and arginine 291 contribute to the carbamoyl phosphate site.

It belongs to the aspartate/ornithine carbamoyltransferase superfamily. OTCase family.

It localises to the cytoplasm. The catalysed reaction is carbamoyl phosphate + L-ornithine = L-citrulline + phosphate + H(+). It participates in amino-acid biosynthesis; L-arginine biosynthesis; L-arginine from L-ornithine and carbamoyl phosphate: step 1/3. Its function is as follows. Reversibly catalyzes the transfer of the carbamoyl group from carbamoyl phosphate (CP) to the N(epsilon) atom of ornithine (ORN) to produce L-citrulline. In Cupriavidus metallidurans (strain ATCC 43123 / DSM 2839 / NBRC 102507 / CH34) (Ralstonia metallidurans), this protein is Ornithine carbamoyltransferase.